A 492-amino-acid chain; its full sequence is Catalase isozyme 1 (492 aa).

Residues H65 and N138 contribute to the active site. Y348 serves as a coordination point for heme.

It belongs to the catalase family. As to quaternary structure, homotetramer. Heme is required as a cofactor. In whole endosperms (aleurones plus starchy endosperm), in isolated aleurones and in developing seeds.

Its subcellular location is the peroxisome. It is found in the glyoxysome. The enzyme catalyses 2 H2O2 = O2 + 2 H2O. In terms of biological role, occurs in almost all aerobically respiring organisms and serves to protect cells from the toxic effects of hydrogen peroxide. This Hordeum vulgare (Barley) protein is Catalase isozyme 1 (CAT1).